The sequence spans 216 residues: ATP phosphoribosyltransferase (216 aa).

This sequence belongs to the ATP phosphoribosyltransferase family. Short subfamily. In terms of assembly, heteromultimer composed of HisG and HisZ subunits.

The protein localises to the cytoplasm. The catalysed reaction is 1-(5-phospho-beta-D-ribosyl)-ATP + diphosphate = 5-phospho-alpha-D-ribose 1-diphosphate + ATP. Its pathway is amino-acid biosynthesis; L-histidine biosynthesis; L-histidine from 5-phospho-alpha-D-ribose 1-diphosphate: step 1/9. Its function is as follows. Catalyzes the condensation of ATP and 5-phosphoribose 1-diphosphate to form N'-(5'-phosphoribosyl)-ATP (PR-ATP). Has a crucial role in the pathway because the rate of histidine biosynthesis seems to be controlled primarily by regulation of HisG enzymatic activity. The protein is ATP phosphoribosyltransferase of Lachnospira eligens (strain ATCC 27750 / DSM 3376 / VPI C15-48 / C15-B4) (Eubacterium eligens).